Here is a 789-residue protein sequence, read N- to C-terminus: DNA topoisomerase 4 subunit A (789 aa).

Residues 34–499 form the Topo IIA-type catalytic domain; sequence LPDLRDGLKP…EKQKVQDSDF (466 aa). The O-(5'-phospho-DNA)-tyrosine intermediate role is filled by Tyr-122.

This sequence belongs to the type II topoisomerase GyrA/ParC subunit family. ParC type 2 subfamily. As to quaternary structure, heterotetramer composed of ParC and ParE.

It is found in the cell membrane. It carries out the reaction ATP-dependent breakage, passage and rejoining of double-stranded DNA.. Its function is as follows. Topoisomerase IV is essential for chromosome segregation. It relaxes supercoiled DNA. Performs the decatenation events required during the replication of a circular DNA molecule. In Mycoplasma pneumoniae (strain ATCC 29342 / M129 / Subtype 1) (Mycoplasmoides pneumoniae), this protein is DNA topoisomerase 4 subunit A.